The following is a 93-amino-acid chain: Regulatory protein RepI (93 aa).

This protein is involved in regulating the plasmid copy-number. Increasing the level of this protein results in a higher plasmid copy-number. The protein is Regulatory protein RepI (repI) of Escherichia coli.